The sequence spans 348 residues: tRNA pseudouridine synthase D (348 aa).

Phenylalanine 27 contributes to the substrate binding site. Catalysis depends on aspartate 80, which acts as the Nucleophile. Asparagine 129 is a binding site for substrate. The 149-residue stretch at 155 to 303 (GVPNYFGSQR…VESARRAVLL (149 aa)) folds into the TRUD domain. Phenylalanine 329 is a substrate binding site.

It belongs to the pseudouridine synthase TruD family.

It carries out the reaction uridine(13) in tRNA = pseudouridine(13) in tRNA. Responsible for synthesis of pseudouridine from uracil-13 in transfer RNAs. The polypeptide is tRNA pseudouridine synthase D (Pectobacterium carotovorum subsp. carotovorum (strain PC1)).